The sequence spans 243 residues: Segregation and condensation protein A (243 aa).

It belongs to the ScpA family. In terms of assembly, component of a cohesin-like complex composed of ScpA, ScpB and the Smc homodimer, in which ScpA and ScpB bind to the head domain of Smc. The presence of the three proteins is required for the association of the complex with DNA.

Its subcellular location is the cytoplasm. In terms of biological role, participates in chromosomal partition during cell division. May act via the formation of a condensin-like complex containing Smc and ScpB that pull DNA away from mid-cell into both cell halves. This chain is Segregation and condensation protein A, found in Staphylococcus epidermidis (strain ATCC 35984 / DSM 28319 / BCRC 17069 / CCUG 31568 / BM 3577 / RP62A).